Consider the following 386-residue polypeptide: 5-hydroxytryptamine receptor 1B (386 aa).

Topologically, residues 1–42 are extracellular; sequence MEEQGIQCAPPPPAASQTGVPLTNLSHNCSADGYIYQDSIAL. 2 N-linked (GlcNAc...) asparagine glycosylation sites follow: Asn-24 and Asn-28. A helical transmembrane segment spans residues 43 to 68; it reads PWKVLLVALLALITLATTLSNAFVIA. Residues 69 to 82 are Cytoplasmic-facing; that stretch reads TVYRTRKLHTPANY. The chain crosses the membrane as a helical span at residues 83–107; the sequence is LIASLAVTDLLVSILVMPISTMYTV. Topologically, residues 108–115 are extracellular; that stretch reads TGRWTLGQ. The chain crosses the membrane as a helical span at residues 116-141; that stretch reads VVCDFWLSSDITCCTASIMHLCVIAL. Cys-118 and Cys-195 form a disulfide bridge. 2 residues coordinate ergotamine: Asp-125 and Thr-130. Positions 142 to 144 match the DRY motif; important for ligand-induced conformation changes and signaling motif; that stretch reads DRY. Topologically, residues 142 to 161 are cytoplasmic; sequence DRYWAITDAVEYSAKRTPKR. A helical membrane pass occupies residues 162–180; the sequence is AAIMIVLVWVFSISISLPP. Residues 181–201 are Extracellular-facing; it reads FFWRQAKAEEEMLDCFVNTDH. Val-197 is an ergotamine binding site. The helical transmembrane segment at 202–225 threads the bilayer; it reads VLYTVYSTVGAFYLPTLLLIALYG. At 226–311 the chain is on the cytoplasmic side; sequence RIYVEARSRI…AARERKATKT (86 aa). Over residues 255–268 the composition is skewed to polar residues; sequence DSPGSTSSVTSINS. Positions 255–278 are disordered; that stretch reads DSPGSTSSVTSINSRAPDVPSESG. Residues 312-333 form a helical membrane-spanning segment; it reads LGIILGAFIVCWLPFFIISLVM. Residues 334–343 are Extracellular-facing; the sequence is PICKDACWFH. Residues 344–366 form a helical membrane-spanning segment; the sequence is MAIFDFFNWLGYLNSLINPIIYT. Positions 361–365 match the NPxxY motif; important for ligand-induced conformation changes and signaling motif; that stretch reads NPIIY. Topologically, residues 367 to 386 are cytoplasmic; the sequence is MSNEDFKQAFHKLIRFKCAG. The S-palmitoyl cysteine moiety is linked to residue Cys-384.

This sequence belongs to the G-protein coupled receptor 1 family. In terms of assembly, homodimer. Heterodimer with HTR1D. Post-translationally, phosphorylated. Desensitization of the receptor may be mediated by its phosphorylation. In terms of processing, palmitoylated. In terms of tissue distribution, predominantly expressed in striatum and Purkinje cells.

It is found in the cell membrane. G-protein coupled receptor for 5-hydroxytryptamine (serotonin). Also functions as a receptor for ergot alkaloid derivatives, various anxiolytic and antidepressant drugs and other psychoactive substances, such as lysergic acid diethylamide (LSD). Ligand binding causes a conformation change that triggers signaling via guanine nucleotide-binding proteins (G proteins) and modulates the activity of downstream effectors, such as adenylate cyclase. HTR1B is coupled to G(i)/G(o) G alpha proteins and mediates inhibitory neurotransmission by inhibiting adenylate cyclase activity. Arrestin family members inhibit signaling via G proteins and mediate activation of alternative signaling pathways. Regulates the release of 5-hydroxytryptamine, dopamine and acetylcholine in the brain, and thereby affects neural activity, nociceptive processing, pain perception, mood and behavior. Besides, plays a role in vasoconstriction of cerebral arteries. In Mus musculus (Mouse), this protein is 5-hydroxytryptamine receptor 1B (Htr1b).